The sequence spans 388 residues: Protochlorophyllide reductase A, chloroplastic (388 aa).

A chloroplast-targeting transit peptide spans 1–74; sequence MALQLLPSTL…SPSGKKTLRQ (74 aa). A compositionally biased stretch (low complexity) spans 48 to 68; sequence VATAPSPVTTSPGSTASSPSG. The interval 48 to 69 is disordered; sequence VATAPSPVTTSPGSTASSPSGK.

It belongs to the short-chain dehydrogenases/reductases (SDR) family. POR subfamily.

It is found in the plastid. It localises to the chloroplast. The enzyme catalyses chlorophyllide a + NADP(+) = protochlorophyllide a + NADPH + H(+). It participates in porphyrin-containing compound metabolism; chlorophyll biosynthesis. Phototransformation of protochlorophyllide (Pchlide) to chlorophyllide (Chlide). This Hordeum vulgare (Barley) protein is Protochlorophyllide reductase A, chloroplastic (PORA).